We begin with the raw amino-acid sequence, 323 residues long: tRNA dimethylallyltransferase (323 aa).

Residue 12–19 participates in ATP binding; the sequence is GPTASGKT. 14 to 19 contributes to the substrate binding site; the sequence is TASGKT. Interaction with substrate tRNA stretches follow at residues 37 to 40 and 161 to 165; these read DSAL and QRLVR.

Belongs to the IPP transferase family. Monomer. Mg(2+) serves as cofactor.

It carries out the reaction adenosine(37) in tRNA + dimethylallyl diphosphate = N(6)-dimethylallyladenosine(37) in tRNA + diphosphate. Catalyzes the transfer of a dimethylallyl group onto the adenine at position 37 in tRNAs that read codons beginning with uridine, leading to the formation of N6-(dimethylallyl)adenosine (i(6)A). This is tRNA dimethylallyltransferase from Azotobacter vinelandii (strain DJ / ATCC BAA-1303).